The primary structure comprises 273 residues: Putative phosphoenolpyruvate synthase regulatory protein (273 aa).

An ADP-binding site is contributed by Ala-153–Thr-160.

This sequence belongs to the pyruvate, phosphate/water dikinase regulatory protein family. PSRP subfamily.

The catalysed reaction is [pyruvate, water dikinase] + ADP = [pyruvate, water dikinase]-phosphate + AMP + H(+). It carries out the reaction [pyruvate, water dikinase]-phosphate + phosphate + H(+) = [pyruvate, water dikinase] + diphosphate. Functionally, bifunctional serine/threonine kinase and phosphorylase involved in the regulation of the phosphoenolpyruvate synthase (PEPS) by catalyzing its phosphorylation/dephosphorylation. The sequence is that of Putative phosphoenolpyruvate synthase regulatory protein from Xylella fastidiosa (strain 9a5c).